Consider the following 300-residue polypeptide: Geranylgeranyl pyrophosphate synthase (300 aa).

Methionine 1 bears the N-acetylmethionine mark. Positions 25, 28, and 57 each coordinate isopentenyl diphosphate. The Mg(2+) site is built by aspartate 64 and aspartate 68. Arginine 73 lines the dimethylallyl diphosphate pocket. An isopentenyl diphosphate-binding site is contributed by arginine 74. Dimethylallyl diphosphate-binding residues include lysine 151, threonine 152, glutamine 185, lysine 202, and lysine 212.

This sequence belongs to the FPP/GGPP synthase family. As to quaternary structure, homohexamer; trimer of homodimers. Mg(2+) serves as cofactor.

The protein resides in the cytoplasm. It localises to the perinuclear region. Its subcellular location is the myofibril. The protein localises to the sarcomere. It is found in the z line. It catalyses the reaction isopentenyl diphosphate + dimethylallyl diphosphate = (2E)-geranyl diphosphate + diphosphate. It carries out the reaction isopentenyl diphosphate + (2E)-geranyl diphosphate = (2E,6E)-farnesyl diphosphate + diphosphate. The catalysed reaction is isopentenyl diphosphate + (2E,6E)-farnesyl diphosphate = (2E,6E,10E)-geranylgeranyl diphosphate + diphosphate. It participates in isoprenoid biosynthesis; farnesyl diphosphate biosynthesis; farnesyl diphosphate from geranyl diphosphate and isopentenyl diphosphate: step 1/1. Its pathway is isoprenoid biosynthesis; geranyl diphosphate biosynthesis; geranyl diphosphate from dimethylallyl diphosphate and isopentenyl diphosphate: step 1/1. It functions in the pathway isoprenoid biosynthesis; geranylgeranyl diphosphate biosynthesis; geranylgeranyl diphosphate from farnesyl diphosphate and isopentenyl diphosphate: step 1/1. Its function is as follows. Catalyzes the trans-addition of the three molecules of isopentenyl diphosphate (IPP) onto dimethylallyl pyrophosphate (DMAPP) to form geranylgeranyl pyrophosphate, an important precursor of carotenoids and geranylated proteins. In Mus musculus (Mouse), this protein is Geranylgeranyl pyrophosphate synthase.